The sequence spans 633 residues: Threonine--tRNA ligase (633 aa).

Residues 1–143 (MRALFLHSNR…SRTIKPKKVK (143 aa)) form an editing domain region. Catalytic stretches follow at residues 220-515 (NPLN…PVLP) and 221-515 (PLND…PVLP). Residues C314, H365, and H488 each coordinate Zn(2+).

The protein belongs to the class-II aminoacyl-tRNA synthetase family. As to quaternary structure, homodimer. Zn(2+) is required as a cofactor.

It is found in the cytoplasm. It carries out the reaction tRNA(Thr) + L-threonine + ATP = L-threonyl-tRNA(Thr) + AMP + diphosphate + H(+). Catalyzes the attachment of threonine to tRNA(Thr) in a two-step reaction: L-threonine is first activated by ATP to form Thr-AMP and then transferred to the acceptor end of tRNA(Thr). Also edits incorrectly charged L-seryl-tRNA(Thr). In Nanoarchaeum equitans (strain Kin4-M), this protein is Threonine--tRNA ligase.